A 150-amino-acid polypeptide reads, in one-letter code: Cytochrome c-type biogenesis protein CcmE (150 aa).

Residues methionine 1–arginine 7 lie on the Cytoplasmic side of the membrane. Residues leucine 8–alanine 28 form a helical; Signal-anchor for type II membrane protein membrane-spanning segment. Over phenylalanine 29 to glutamine 150 the chain is Periplasmic. Residues histidine 123 and tyrosine 127 each coordinate heme.

The protein belongs to the CcmE/CycJ family.

The protein localises to the cell inner membrane. Functionally, heme chaperone required for the biogenesis of c-type cytochromes. Transiently binds heme delivered by CcmC and transfers the heme to apo-cytochromes in a process facilitated by CcmF and CcmH. This Sinorhizobium fredii (strain NBRC 101917 / NGR234) protein is Cytochrome c-type biogenesis protein CcmE.